We begin with the raw amino-acid sequence, 1235 residues long: DNA polymerase (1235 aa).

The DOD-type homing endonuclease domain occupies 773–887 (LLGYYISSGD…LILLLNSIGV (115 aa)).

It belongs to the DNA polymerase type-B family. Post-translationally, this protein undergoes a protein self splicing that involves a post-translational excision of the intervening region (intein) followed by peptide ligation.

It catalyses the reaction DNA(n) + a 2'-deoxyribonucleoside 5'-triphosphate = DNA(n+1) + diphosphate. The polypeptide is DNA polymerase (pol) (Pyrococcus horikoshii (strain ATCC 700860 / DSM 12428 / JCM 9974 / NBRC 100139 / OT-3)).